A 485-amino-acid chain; its full sequence is N-succinylglutamate 5-semialdehyde dehydrogenase (485 aa).

An NAD(+)-binding site is contributed by 220-225; that stretch reads GSANTG. Active-site residues include Glu-243 and Cys-278.

This sequence belongs to the aldehyde dehydrogenase family. AstD subfamily.

The catalysed reaction is N-succinyl-L-glutamate 5-semialdehyde + NAD(+) + H2O = N-succinyl-L-glutamate + NADH + 2 H(+). The protein operates within amino-acid degradation; L-arginine degradation via AST pathway; L-glutamate and succinate from L-arginine: step 4/5. In terms of biological role, catalyzes the NAD-dependent reduction of succinylglutamate semialdehyde into succinylglutamate. The protein is N-succinylglutamate 5-semialdehyde dehydrogenase of Aliivibrio salmonicida (strain LFI1238) (Vibrio salmonicida (strain LFI1238)).